A 580-amino-acid polypeptide reads, in one-letter code: FAD-dependent monooxygenase DEP4 (580 aa).

47 to 50 (VWSK) is an FAD binding site. NADP(+) is bound at residue 58–60 (FAQ). V112 contacts FAD. NADP(+)-binding positions include 186–205 (VGRS…AGKK), 222–223 (AP), and 354–355 (DI). M473 contributes to the FAD binding site.

This sequence belongs to the FAD-binding monooxygenase family. The cofactor is FAD.

It participates in polyketide biosynthesis. Functionally, part of the gene cluster that mediates the biosynthesis of depudecin, a highly oxidized eleven-carbon linear polyketide that acts as a histone deacetylase (HDAC) inhibitor and makes a small contribution to pathogenesis. The reducing polyketide synthase DEP5 is the central enzyme in depudecin biosynthesis by yielding the backbone polyketide chain. The monooxygenases DEP2 and DEP4, as well as the uncharacterized protein DEP1, then act as tailoring enzymes to modify the intermediate polyketide chain into depudecin. The chain is FAD-dependent monooxygenase DEP4 from Fusarium langsethiae.